We begin with the raw amino-acid sequence, 159 residues long: Eukaryotic translation initiation factor 5A (159 aa).

Residues 1 to 12 (MSDEEHQFESKA) show a composition bias toward basic and acidic residues. Residues 1–23 (MSDEEHQFESKADAGASKTYPQQ) form a disordered region. Position 52 is a hypusine (Lys-52).

The protein belongs to the eIF-5A family. In terms of processing, lys-52 undergoes hypusination, a unique post-translational modification that consists in the addition of a butylamino group from spermidine to lysine side chain, leading to the formation of the unusual amino acid hypusine. eIF-5As are the only known proteins to undergo this modification, which is essential for their function.

Its function is as follows. Translation factor that promotes translation elongation and termination, particularly upon ribosome stalling at specific amino acid sequence contexts. Binds between the exit (E) and peptidyl (P) site of the ribosome and promotes rescue of stalled ribosome: specifically required for efficient translation of polyproline-containing peptides as well as other motifs that stall the ribosome. Acts as a ribosome quality control (RQC) cofactor by joining the RQC complex to facilitate peptidyl transfer during CAT tailing step. The sequence is that of Eukaryotic translation initiation factor 5A (EIFSV1) from Senecio vernalis (Spring groundsel).